The following is a 293-amino-acid chain: Large ribosomal subunit protein uL18 (293 aa).

Basic and acidic residues predominate over residues Ile247–Val263. The interval Ile247–Gln283 is disordered. Over residues Lys264–Gln283 the composition is skewed to basic residues.

This sequence belongs to the universal ribosomal protein uL18 family. As to quaternary structure, component of the large ribosomal subunit (LSU).

The protein resides in the cytoplasm. It is found in the nucleus. Component of the ribosome, a large ribonucleoprotein complex responsible for the synthesis of proteins in the cell. The small ribosomal subunit (SSU) binds messenger RNAs (mRNAs) and translates the encoded message by selecting cognate aminoacyl-transfer RNA (tRNA) molecules. The large subunit (LSU) contains the ribosomal catalytic site termed the peptidyl transferase center (PTC), which catalyzes the formation of peptide bonds, thereby polymerizing the amino acids delivered by tRNAs into a polypeptide chain. The nascent polypeptides leave the ribosome through a tunnel in the LSU and interact with protein factors that function in enzymatic processing, targeting, and the membrane insertion of nascent chains at the exit of the ribosomal tunnel. The protein is Large ribosomal subunit protein uL18 (RPL5) of Suberites domuncula (Sponge).